We begin with the raw amino-acid sequence, 193 residues long: Ion-translocating oxidoreductase complex subunit A (193 aa).

A run of 6 helical transmembrane segments spans residues 5 to 25 (LLLF…FLGL), 39 to 59 (MGMG…AWLI), 63 to 83 (ILIP…VIAV), 102 to 122 (LLGI…VALL), 134 to 154 (ALYG…FAAI), and 171 to 191 (AIAL…SGLV).

Belongs to the NqrDE/RnfAE family. In terms of assembly, the complex is composed of six subunits: RsxA, RsxB, RsxC, RsxD, RsxE and RsxG.

The protein localises to the cell inner membrane. In terms of biological role, part of a membrane-bound complex that couples electron transfer with translocation of ions across the membrane. Required to maintain the reduced state of SoxR. The polypeptide is Ion-translocating oxidoreductase complex subunit A (Escherichia fergusonii (strain ATCC 35469 / DSM 13698 / CCUG 18766 / IAM 14443 / JCM 21226 / LMG 7866 / NBRC 102419 / NCTC 12128 / CDC 0568-73)).